Consider the following 199-residue polypeptide: Photosystem I reaction center subunit XI (199 aa).

The next 2 membrane-spanning stretches (helical) occupy residues 108–128 and 165–185; these read VTAG…LLVL and FWLG…TLHL.

Belongs to the PsaL family.

The protein localises to the cellular thylakoid membrane. In Prochlorococcus marinus (strain MIT 9215), this protein is Photosystem I reaction center subunit XI.